We begin with the raw amino-acid sequence, 388 residues long: Chorismate synthase (388 aa).

NADP(+)-binding residues include arginine 39 and arginine 45. FMN contacts are provided by residues 130–132 (RSS), 251–252 (NA), glycine 296, 311–315 (KPIPT), and arginine 337.

It belongs to the chorismate synthase family. As to quaternary structure, homotetramer. The cofactor is FMNH2.

The catalysed reaction is 5-O-(1-carboxyvinyl)-3-phosphoshikimate = chorismate + phosphate. Its pathway is metabolic intermediate biosynthesis; chorismate biosynthesis; chorismate from D-erythrose 4-phosphate and phosphoenolpyruvate: step 7/7. Functionally, catalyzes the anti-1,4-elimination of the C-3 phosphate and the C-6 proR hydrogen from 5-enolpyruvylshikimate-3-phosphate (EPSP) to yield chorismate, which is the branch point compound that serves as the starting substrate for the three terminal pathways of aromatic amino acid biosynthesis. This reaction introduces a second double bond into the aromatic ring system. This chain is Chorismate synthase, found in Streptococcus pneumoniae serotype 19F (strain G54).